A 413-amino-acid polypeptide reads, in one-letter code: MAP kinase-interacting serine/threonine-protein kinase 1 (413 aa).

A disordered region spans residues 1 to 26 (MGSSEPLPIVDSDKRRKKKRKTRATD). Phosphothreonine; by PAK2 is present on T22. At S27 the chain carries Phosphoserine; by PAK2. A Protein kinase domain is found at 37–321 (QLTSELLGEG…AAQVLQHPWV (285 aa)). ATP is bound by residues 43 to 51 (LGEGAYAKV) and K66. Residue D158 is the Proton acceptor of the active site. A phosphoserine mark is found at S168 and S173. T197, T202, and T332 each carry phosphothreonine.

It belongs to the protein kinase superfamily. CAMK Ser/Thr protein kinase family. As to quaternary structure, interacts with the C-terminal regions of EIF4G1 and EIF4G2. Also binds to dephosphorylated ERK1 and ERK2, and to the p38 kinases. The cofactor is Mg(2+). Post-translationally, dual phosphorylation of Thr-197 and Thr-202 activates the kinase. Phosphorylation of Thr-332 activates the kinase. MAPK3/ERK1 is one of the kinases which activate MKNK1/MNK1. Phosphorylation by PAK2 leads to a reduced phosphorylation of EIF4G1.

The enzyme catalyses L-seryl-[protein] + ATP = O-phospho-L-seryl-[protein] + ADP + H(+). It catalyses the reaction L-threonyl-[protein] + ATP = O-phospho-L-threonyl-[protein] + ADP + H(+). Its activity is regulated as follows. Phosphorylated and activated by the p38 kinases and kinases in the Erk pathway. May play a role in the response to environmental stress and cytokines. Appears to regulate translation by phosphorylating EIF4E, thus increasing the affinity of this protein for the 7-methylguanosine-containing mRNA cap. The chain is MAP kinase-interacting serine/threonine-protein kinase 1 (Mknk1) from Rattus norvegicus (Rat).